Reading from the N-terminus, the 136-residue chain is Transcription antitermination protein NusB (136 aa).

The protein belongs to the NusB family.

Its function is as follows. Involved in transcription antitermination. Required for transcription of ribosomal RNA (rRNA) genes. Binds specifically to the boxA antiterminator sequence of the ribosomal RNA (rrn) operons. This is Transcription antitermination protein NusB from Treponema denticola (strain ATCC 35405 / DSM 14222 / CIP 103919 / JCM 8153 / KCTC 15104).